We begin with the raw amino-acid sequence, 277 residues long: Orotidine 5'-phosphate decarboxylase (277 aa).

Substrate-binding positions include aspartate 40, 62–64 (KTH), 93–102 (DRKFIDIGNT), tyrosine 229, and arginine 247. Residue lysine 95 is the Proton donor of the active site.

It belongs to the OMP decarboxylase family.

It catalyses the reaction orotidine 5'-phosphate + H(+) = UMP + CO2. It functions in the pathway pyrimidine metabolism; UMP biosynthesis via de novo pathway; UMP from orotate: step 2/2. The protein is Orotidine 5'-phosphate decarboxylase (pyrG) of Aspergillus oryzae (strain ATCC 42149 / RIB 40) (Yellow koji mold).